The following is a 1040-amino-acid chain: Multidrug resistance protein MdtB (1040 aa).

12 helical membrane passes run 16 to 36 (FIMRPVATTLLMVAILLAGII), 347 to 367 (LMMAIALVVMIIYLFLRNIPA), 369 to 389 (IIPGVAVPLSLIGTFAVMVFL), 396 to 416 (LTLMALTIATGFVVDDAIVVI), 440 to 460 (IGFTIISLTFSLIAVLIPLLF), 472 to 492 (FAITLAVAILISAVVSLTLTP), 537 to 557 (WLTLSVALSTLLLSVLLWVFI), 863 to 883 (LGSTVWLIVAAVVAMYIVLGI), 888 to 908 (FIHPITILSTLPTAGVGALLA), 911 to 931 (IAGSELDVIAIIGIILLIGIV), 968 to 988 (ILMTTLAALLGALPLMLSTGV), and 998 to 1018 (IGMVGGLIVSQVLTLFTTPVI).

Belongs to the resistance-nodulation-cell division (RND) (TC 2.A.6) family. MdtB subfamily. Part of a tripartite efflux system composed of MdtA, MdtB and MdtC. MdtB forms a heteromultimer with MdtC.

The protein localises to the cell inner membrane. Its function is as follows. The MdtABC tripartite complex confers resistance against novobiocin and deoxycholate. This Escherichia coli O139:H28 (strain E24377A / ETEC) protein is Multidrug resistance protein MdtB.